A 206-amino-acid chain; its full sequence is Thymidylate kinase (206 aa).

Residue 11 to 18 participates in ATP binding; it reads GIDGAGKT.

It belongs to the thymidylate kinase family.

The enzyme catalyses dTMP + ATP = dTDP + ADP. Its function is as follows. Phosphorylation of dTMP to form dTDP in both de novo and salvage pathways of dTTP synthesis. The chain is Thymidylate kinase from Paraburkholderia xenovorans (strain LB400).